The chain runs to 184 residues: Transmembrane protein 140 (184 aa).

At 1–12 (MAISRVWRNRLS) the chain is on the cytoplasmic side. Residues 13-33 (FMAIMILVAMVLSLMSYALLW) traverse the membrane as a helical segment. The Extracellular segment spans residues 34–83 (KAGNLTDVPNLRIGFYNFCLWKEDIGSLECYNFPELGVLGIPQVGLALAR). N-linked (GlcNAc...) asparagine glycosylation is present at Asn37. A helical membrane pass occupies residues 84–104 (LGVYGALVLAVFVPLPLLLAQ). The Cytoplasmic portion of the chain corresponds to 105–117 (CNSDEGEWRLAVG). Residues 118-138 (FLGASSVLLAGGLSLFLFLVW) form a helical membrane-spanning segment. The Extracellular portion of the chain corresponds to 139–149 (KWLRLSFLGPG). Residues 150–170 (FLSLCLAQALLIILLMAMVMF) form a helical membrane-spanning segment. Over 171-184 (PPRDKKDKNHWENC) the chain is Cytoplasmic.

The protein resides in the membrane. The polypeptide is Transmembrane protein 140 (Tmem140) (Rattus norvegicus (Rat)).